The sequence spans 366 residues: Transmembrane protein 25 (366 aa).

The first 26 residues, 1-26 (MALPPGPAALRHTLLLLPALLSSGWG), serve as a signal peptide directing secretion. Residues 27–232 (ELEPQIDGQT…APGLLATRVE (206 aa)) are Extracellular-facing. Residues 30-123 (PQIDGQTWAE…SGRSANASVI (94 aa)) enclose the Ig-like domain. Cysteines 52 and 107 form a disulfide. N-linked (GlcNAc...) asparagine glycans are attached at residues Asn-106, Asn-162, Asn-175, Asn-192, and Asn-205. Residues 233 to 253 (VPLLGIVVAAGLALGTLVGFS) form a helical membrane-spanning segment. Topologically, residues 254–366 (TLVACLVCRK…SSVSSDEIWL (113 aa)) are cytoplasmic. Residues 299–308 (PSNLQLNDLT) show a composition bias toward polar residues. Positions 299-335 (PSNLQLNDLTPDSRAVKPADRQMAQNNSRPELLDPEP) are disordered.

In terms of assembly, interacts with GRIN2B. In terms of tissue distribution, expressed throughout the brain with higher levels in the pyramidal cell layer of the hippocampal CA1 and CA3 regions. Also highly expressed within the hippocampal dentate gyrus region and cerebellum and in scattered neurons in the cerebral cortex.

The protein localises to the cell membrane. It localises to the secreted. Its subcellular location is the late endosome. It is found in the lysosome. In neurons, modulates the degradation of NMDA receptor GRIN2B subunit. Plays a role in the regulation of neuronal excitability. This chain is Transmembrane protein 25 (TMEM25), found in Homo sapiens (Human).